Reading from the N-terminus, the 117-residue chain is Fluoride-specific ion channel FluC 2 (117 aa).

Transmembrane regions (helical) follow at residues methionine 1–isoleucine 21 and phenylalanine 46–valine 66. Residues glycine 71 and threonine 74 each contribute to the Na(+) site. The chain crosses the membrane as a helical span at residues leucine 95–tyrosine 115.

It belongs to the fluoride channel Fluc/FEX (TC 1.A.43) family.

The protein localises to the cell membrane. The enzyme catalyses fluoride(in) = fluoride(out). With respect to regulation, na(+) is not transported, but it plays an essential structural role and its presence is essential for fluoride channel function. Its function is as follows. Fluoride-specific ion channel. Important for reducing fluoride concentration in the cell, thus reducing its toxicity. In Staphylococcus aureus (strain MSSA476), this protein is Fluoride-specific ion channel FluC 2.